The primary structure comprises 640 residues: ESX-3 secretion system protein EccA3 (640 aa).

Position 393–400 (393–400) interacts with ATP; sequence GPPGTGKT.

The protein belongs to the CbxX/CfxQ family. As to quaternary structure, part of the ESX-3 / type VII secretion system (T7SS), which is composed of cytosolic and membrane components.

The protein resides in the cytoplasm. Its function is as follows. Part of an ESX-3 / type VII specialized secretion system (T7SS), which exports several proteins. EccA3 exhibits ATPase activity and may provide energy for the export of ESX-3 substrates. The sequence is that of ESX-3 secretion system protein EccA3 from Mycobacterium leprae (strain TN).